Here is a 311-residue protein sequence, read N- to C-terminus: Putative ankyrin repeat protein RF_0923 (311 aa).

ANK repeat units lie at residues 42-71 (IDNTALIWAVDKGLEKVCEMLIPKMSEQAI), 77-106 (NGNTALTLAASKGLEKICELLIPKMSPQAI), 112-141 (NGNTALTWAAWKDLEKICEMLIPKMSPQAI), 147-176 (NGNTALILAAWKGLEKICKILIPKMFEQAI), and 182-213 (KGCTALTLAADKDLKKIYELLINKMSIDAINH).

The sequence is that of Putative ankyrin repeat protein RF_0923 from Rickettsia felis (strain ATCC VR-1525 / URRWXCal2) (Rickettsia azadi).